Consider the following 563-residue polypeptide: Pyruvate decarboxylase isozyme 2 (563 aa).

4 residues coordinate pyruvate: Asp28, His115, Tyr157, and Arg224. Thiamine diphosphate contacts are provided by residues Thr390 and 413–415 (GSI). Residue Asp444 coordinates Mg(2+). Thiamine diphosphate-binding positions include 445 to 446 (GS) and 471 to 476 (NNGYTI). Residues Asn471 and Gly473 each coordinate Mg(2+). Residue Glu477 participates in pyruvate binding.

This sequence belongs to the TPP enzyme family. Homotetramer. Mg(2+) is required as a cofactor. The cofactor is thiamine diphosphate.

The protein localises to the cytoplasm. Its subcellular location is the nucleus. It catalyses the reaction pyruvate + H(+) = acetaldehyde + CO2. The enzyme catalyses 3-methyl-2-oxobutanoate + H(+) = 2-methylpropanal + CO2. The catalysed reaction is (S)-3-methyl-2-oxopentanoate + H(+) = 2-methylbutanal + CO2. It carries out the reaction indole-3-pyruvate + H(+) = indole-3-acetaldehyde + CO2. It catalyses the reaction 3-phenylpyruvate + H(+) = 2-phenylacetaldehyde + CO2. The enzyme catalyses 2-oxobutanoate + H(+) = propanal + CO2. The catalysed reaction is 2-oxopentanoate + H(+) = butanal + CO2. It carries out the reaction 2 acetaldehyde = acetoin. It catalyses the reaction acetaldehyde + pyruvate + H(+) = acetoin + CO2. It participates in fermentation; ethanol fermentation. Its pathway is amino-acid degradation; Ehrlich pathway. Allosterically activated by its substrate, pyruvate. Second most abundant of three pyruvate decarboxylases (PDC1, PDC5, PDC6) implicated in the nonoxidative conversion of pyruvate to acetaldehyde and carbon dioxide during alcoholic fermentation. Most of the produced acetaldehyde is subsequently reduced to ethanol, but some is required for cytosolic acetyl-CoA production for biosynthetic pathways. The enzyme is also one of five 2-oxo acid decarboxylases (PDC1, PDC5, PDC6, ARO10, and THI3) able to decarboxylate more complex 2-oxo acids (alpha-keto-acids) than pyruvate, which seem mainly involved in amino acid catabolism. Here the enzyme catalyzes the decarboxylation of amino acids, which, in a first step, have been transaminated to the corresponding 2-oxo acids. In a third step, the resulting aldehydes are reduced to alcohols, collectively referred to as fusel oils or alcohols. Its preferred substrates are the transaminated amino acids derived from threonine (2-oxobutanoate), norvaline (2-oxopentanoate), valine (3-methyl-2-oxobutanoate, also alpha-keto-isovalerate), isoleucine ((3S)-3-methyl-2-oxopentanoate, also alpha-keto-beta-methylvalerate), phenylalanine (phenylpyruvate), and tryptophan (3-(indol-3-yl)pyruvate), whereas transaminated leucine is no substrate. In a side-reaction the carbanionic intermediate (or active aldehyde) generated by decarboxylation or by activation of an aldehyde can react with an aldehyde via condensation (or carboligation) yielding a 2-hydroxy ketone, collectively called acyloins. In Saccharomyces cerevisiae (strain ATCC 204508 / S288c) (Baker's yeast), this protein is Pyruvate decarboxylase isozyme 2 (PDC5).